Reading from the N-terminus, the 318-residue chain is NADH-ubiquinone oxidoreductase chain 1 (318 aa).

Transmembrane regions (helical) follow at residues 2-22, 70-90, 100-120, 136-156, 172-192, 222-242, 253-273, and 294-314; these read FMIN…FLTL, MFII…SPLP, LGVL…LWSG, VAQT…VLLM, LWLL…TLAE, LFFL…AILF, ELYT…FLWI, and LPLT…TASI.

It belongs to the complex I subunit 1 family. In terms of assembly, core subunit of respiratory chain NADH dehydrogenase (Complex I) which is composed of 45 different subunits.

The protein resides in the mitochondrion inner membrane. It carries out the reaction a ubiquinone + NADH + 5 H(+)(in) = a ubiquinol + NAD(+) + 4 H(+)(out). Core subunit of the mitochondrial membrane respiratory chain NADH dehydrogenase (Complex I) which catalyzes electron transfer from NADH through the respiratory chain, using ubiquinone as an electron acceptor. Essential for the catalytic activity and assembly of complex I. This is NADH-ubiquinone oxidoreductase chain 1 (MT-ND1) from Balaenoptera physalus (Fin whale).